Reading from the N-terminus, the 425-residue chain is Serine--tRNA ligase (425 aa).

Position 233 to 235 (233 to 235 (TAE)) interacts with L-serine. 264 to 266 (RRE) serves as a coordination point for ATP. An L-serine-binding site is contributed by Glu-287. ATP is bound at residue 351–354 (EISS). Position 385 (Ser-385) interacts with L-serine.

This sequence belongs to the class-II aminoacyl-tRNA synthetase family. Type-1 seryl-tRNA synthetase subfamily. As to quaternary structure, homodimer. The tRNA molecule binds across the dimer.

The protein resides in the cytoplasm. It carries out the reaction tRNA(Ser) + L-serine + ATP = L-seryl-tRNA(Ser) + AMP + diphosphate + H(+). It catalyses the reaction tRNA(Sec) + L-serine + ATP = L-seryl-tRNA(Sec) + AMP + diphosphate + H(+). Its pathway is aminoacyl-tRNA biosynthesis; selenocysteinyl-tRNA(Sec) biosynthesis; L-seryl-tRNA(Sec) from L-serine and tRNA(Sec): step 1/1. In terms of biological role, catalyzes the attachment of serine to tRNA(Ser). Is also able to aminoacylate tRNA(Sec) with serine, to form the misacylated tRNA L-seryl-tRNA(Sec), which will be further converted into selenocysteinyl-tRNA(Sec). This chain is Serine--tRNA ligase, found in Synechococcus sp. (strain CC9605).